The following is a 29-amino-acid chain: Dermaseptin-J6 (29 aa).

Position 29 is a valine amide (Val-29).

Expressed by the skin glands.

Its subcellular location is the secreted. Functionally, has antimicrobial activity. This chain is Dermaseptin-J6, found in Phasmahyla jandaia (Jandaia leaf frog).